The primary structure comprises 426 residues: LIM/homeobox protein Lhx2 (426 aa).

The span at 14-24 (VIDEMDRRQER) shows a compositional bias: basic and acidic residues. Residues 14–42 (VIDEMDRRQERGSGISSAIDRGDTETTMP) are disordered. LIM zinc-binding domains lie at 52–104 (CAGC…CKED) and 114–167 (CARC…CRLH). Residues 248 to 268 (DAEHLDRDQPYPSSQKTKRMR) form a disordered region. A DNA-binding region (homeobox) is located at residues 264-323 (TKRMRTSFKHHQLRTMKSYFAINHNPDAKDLKQLAQKTGLTKRVLQVWFQNARAKFRRNL). The short motif at 305–321 (KRVLQVWFQNARAKFRR) is the Nuclear localization signal element. Residues 326 to 354 (QENTGVDKTSDATLQTGTPSGPASELSNA) are compositionally biased toward polar residues. Residues 326–370 (QENTGVDKTSDATLQTGTPSGPASELSNASLSPSSTPTTLTDLTS) are disordered. Positions 355–370 (SLSPSSTPTTLTDLTS) are enriched in low complexity.

In terms of assembly, interacts (via LIM domains) with CITED2. Interacts with POU4F2. As to expression, found in discrete regions of the developing CNS, primarily in diencephalic and telencephalic structures and a subset of lymphoid tissues. Also found in embryonic spinal cord and fetal liver.

It is found in the nucleus. Functionally, acts as a transcriptional activator. Stimulates the promoter of the alpha-glycoprotein gene. Transcriptional regulatory protein involved in the control of cell differentiation in developing lymphoid and neural cell types. The sequence is that of LIM/homeobox protein Lhx2 (Lhx2) from Rattus norvegicus (Rat).